Consider the following 256-residue polypeptide: Enolase-phosphatase E1 (256 aa).

Mg(2+) is bound by residues aspartate 14 and glutamate 16. Substrate-binding positions include 142 to 143 (SS) and lysine 176. Aspartate 201 lines the Mg(2+) pocket.

This sequence belongs to the HAD-like hydrolase superfamily. MasA/MtnC family. Monomer. Mg(2+) serves as cofactor.

The protein localises to the cytoplasm. It is found in the nucleus. The enzyme catalyses 5-methylsulfanyl-2,3-dioxopentyl phosphate + H2O = 1,2-dihydroxy-5-(methylsulfanyl)pent-1-en-3-one + phosphate. It functions in the pathway amino-acid biosynthesis; L-methionine biosynthesis via salvage pathway; L-methionine from S-methyl-5-thio-alpha-D-ribose 1-phosphate: step 3/6. Its pathway is amino-acid biosynthesis; L-methionine biosynthesis via salvage pathway; L-methionine from S-methyl-5-thio-alpha-D-ribose 1-phosphate: step 4/6. In terms of biological role, bifunctional enzyme that catalyzes the enolization of 2,3-diketo-5-methylthiopentyl-1-phosphate (DK-MTP-1-P) into the intermediate 2-hydroxy-3-keto-5-methylthiopentenyl-1-phosphate (HK-MTPenyl-1-P), which is then dephosphorylated to form the acireductone 1,2-dihydroxy-3-keto-5-methylthiopentene (DHK-MTPene). This is Enolase-phosphatase E1 from Drosophila melanogaster (Fruit fly).